We begin with the raw amino-acid sequence, 184 residues long: MNWRSERIWIEVITGSRKTSNFFWACILFLGSLGFLLVGTSSYLGRNLISLFPSQQIPFFPQGIVMSFYGIAGLFISSYLWCTISWNVGSGYDRFDRKEGIVYIFRWGFPGKNRRIFLRFLMKDIQSIRMEVKEGVYPRPALYMEIRGQGTIPLTRTDENFTSREMEQKAAELAYFLNVPIEVF.

2 consecutive transmembrane segments (helical) span residues 22–42 and 57–77; these read FFWA…GTSS and IPFF…LFIS.

It belongs to the Ycf4 family.

It localises to the plastid. The protein resides in the chloroplast thylakoid membrane. In terms of biological role, seems to be required for the assembly of the photosystem I complex. The sequence is that of Photosystem I assembly protein Ycf4 from Ceratophyllum demersum (Rigid hornwort).